Consider the following 447-residue polypeptide: Kynureninase (447 aa).

Residues Leu106, Thr107, 134 to 137 (FPSD), Asp220, His223, and Tyr245 contribute to the pyridoxal 5'-phosphate site. Lys246 is subject to N6-(pyridoxal phosphate)lysine. Pyridoxal 5'-phosphate is bound by residues Trp275 and Asn303.

It belongs to the kynureninase family. As to quaternary structure, homodimer. Requires pyridoxal 5'-phosphate as cofactor.

It is found in the cytoplasm. It catalyses the reaction L-kynurenine + H2O = anthranilate + L-alanine + H(+). The enzyme catalyses 3-hydroxy-L-kynurenine + H2O = 3-hydroxyanthranilate + L-alanine + H(+). It functions in the pathway amino-acid degradation; L-kynurenine degradation; L-alanine and anthranilate from L-kynurenine: step 1/1. It participates in cofactor biosynthesis; NAD(+) biosynthesis; quinolinate from L-kynurenine: step 2/3. Its function is as follows. Catalyzes the cleavage of L-kynurenine (L-Kyn) and L-3-hydroxykynurenine (L-3OHKyn) into anthranilic acid (AA) and 3-hydroxyanthranilic acid (3-OHAA), respectively. The polypeptide is Kynureninase (Eremothecium gossypii (strain ATCC 10895 / CBS 109.51 / FGSC 9923 / NRRL Y-1056) (Yeast)).